The following is a 405-amino-acid chain: Argininosuccinate synthase (405 aa).

ATP-binding positions include 10–18 (AFSGGLDTS) and A37. L-citrulline-binding residues include Y90 and S95. Residue G120 participates in ATP binding. T122, N126, and D127 together coordinate L-aspartate. N126 is an L-citrulline binding site. L-citrulline contacts are provided by R130, S181, S190, E266, and Y278.

Belongs to the argininosuccinate synthase family. Type 1 subfamily. As to quaternary structure, homotetramer.

It is found in the cytoplasm. It catalyses the reaction L-citrulline + L-aspartate + ATP = 2-(N(omega)-L-arginino)succinate + AMP + diphosphate + H(+). It functions in the pathway amino-acid biosynthesis; L-arginine biosynthesis; L-arginine from L-ornithine and carbamoyl phosphate: step 2/3. This is Argininosuccinate synthase from Rhizorhabdus wittichii (strain DSM 6014 / CCUG 31198 / JCM 15750 / NBRC 105917 / EY 4224 / RW1) (Sphingomonas wittichii).